A 336-amino-acid chain; its full sequence is uncharacterized protein (336 aa).

The signal sequence occupies residues Met-1 to Ala-21. Lys-38 serves as a coordination point for NADP(+). A Phosphothreonine modification is found at Thr-153. Position 167 (Tyr-167) interacts with NADP(+).

This sequence belongs to the NAD(P)-dependent epimerase/dehydratase family. Dihydroflavonol-4-reductase subfamily.

This is an uncharacterized protein from Schizosaccharomyces pombe (strain 972 / ATCC 24843) (Fission yeast).